Consider the following 73-residue polypeptide: Putative antitoxin M1627_0365 (73 aa).

This sequence belongs to the UPF0330 family.

Functionally, possibly the antitoxin component of a type II toxin-antitoxin (TA) system. The protein is Putative antitoxin M1627_0365 of Saccharolobus islandicus (strain M.16.27) (Sulfolobus islandicus).